A 458-amino-acid polypeptide reads, in one-letter code: ATP synthase subunit beta (458 aa).

148-155 (GGAGVGKT) is an ATP binding site.

The protein belongs to the ATPase alpha/beta chains family. As to quaternary structure, F-type ATPases have 2 components, CF(1) - the catalytic core - and CF(0) - the membrane proton channel. CF(1) has five subunits: alpha(3), beta(3), gamma(1), delta(1), epsilon(1). CF(0) has three main subunits: a(1), b(2) and c(9-12). The alpha and beta chains form an alternating ring which encloses part of the gamma chain. CF(1) is attached to CF(0) by a central stalk formed by the gamma and epsilon chains, while a peripheral stalk is formed by the delta and b chains.

The protein resides in the cell inner membrane. The catalysed reaction is ATP + H2O + 4 H(+)(in) = ADP + phosphate + 5 H(+)(out). Its function is as follows. Produces ATP from ADP in the presence of a proton gradient across the membrane. The catalytic sites are hosted primarily by the beta subunits. This Francisella tularensis subsp. novicida (strain U112) protein is ATP synthase subunit beta.